A 469-amino-acid chain; its full sequence is 3-isopropylmalate dehydratase large subunit (469 aa).

[4Fe-4S] cluster is bound by residues cysteine 347, cysteine 407, and cysteine 410.

Belongs to the aconitase/IPM isomerase family. LeuC type 1 subfamily. In terms of assembly, heterodimer of LeuC and LeuD. [4Fe-4S] cluster is required as a cofactor.

The enzyme catalyses (2R,3S)-3-isopropylmalate = (2S)-2-isopropylmalate. Its pathway is amino-acid biosynthesis; L-leucine biosynthesis; L-leucine from 3-methyl-2-oxobutanoate: step 2/4. Catalyzes the isomerization between 2-isopropylmalate and 3-isopropylmalate, via the formation of 2-isopropylmaleate. This Prochlorococcus marinus (strain MIT 9515) protein is 3-isopropylmalate dehydratase large subunit.